Reading from the N-terminus, the 925-residue chain is Coronin-7 (925 aa).

WD repeat units follow at residues 75–115 (CHSD…QALP), 124–163 (PEDL…PLTE), 166–205 (AHGD…QASQ), and 209–253 (AHEN…SALA). Disordered regions lie at residues 196-216 (DPRT…SRDS) and 399-465 (LVPP…SLQS). The span at 201–210 (PQASQSTQAH) shows a compositional bias: polar residues. A compositionally biased stretch (low complexity) spans 429–460 (SSPPSSLTSPSTPSSLGPTLSSTSGIGTGPSL). Residues serine 462 and serine 465 each carry the phosphoserine modification. Lysine 472 is covalently cross-linked (Glycyl lysine isopeptide (Lys-Gly) (interchain with G-Cter in ubiquitin)). WD repeat units follow at residues 542–582 (QNGA…LEEV), 592–632 (GHME…DRLK), and 635–674 (GHQD…EPLQ). Residue lysine 680 forms a Glycyl lysine isopeptide (Lys-Gly) (interchain with G-Cter in ubiquitin) linkage. The WD 8 repeat unit spans residues 728–768 (DVAPSTLVPSYEPRHWPGAPDWQGDARVFLYELLPESPFFM). The disordered stretch occupies residues 857-925 (LQPPDMSPVS…FEGVDEDEWD (69 aa)). Residues 866 to 882 (SQAPREAPARRAPSSAQ) show a composition bias toward low complexity. The span at 884–896 (LEEKSDQQKKEEL) shows a compositional bias: basic and acidic residues. Residue serine 915 is modified to Phosphoserine.

The protein belongs to the WD repeat coronin family. In terms of assembly, interacts with clathrin adapter AP1 complex. This interaction takes place at Golgi membranes and not AP1-positive endosomal membranes. Interacts (when ubiquitinated at Lys-472) with EPS15. Post-translationally, the membrane-associated form is phosphorylated on tyrosine residues. Ubiquitinated via 'Lys-33'-linked ubiquitin chains by the BCR(KLHL20) E3 ubiquitin ligase complex: 'Lys-33'-linked ubiquitination promotes interaction with EPS15 and facilitates actin polymerization at the trans-Golgi network, thereby facilitating post-Golgi trafficking. Deubiquitinated by ZRANB1/TRABID.

Its subcellular location is the golgi apparatus membrane. The protein localises to the golgi apparatus. It localises to the trans-Golgi network. The protein resides in the cytoplasmic vesicle. It is found in the cytoplasm. Its subcellular location is the cytosol. Its function is as follows. F-actin regulator involved in anterograde Golgi to endosome transport: upon ubiquitination via 'Lys-33'-linked ubiquitin chains by the BCR(KLHL20) E3 ubiquitin ligase complex, interacts with EPS15 and localizes to the trans-Golgi network, where it promotes actin polymerization, thereby facilitating post-Golgi trafficking. May play a role in the maintenance of the Golgi apparatus morphology. The polypeptide is Coronin-7 (CORO7) (Pongo abelii (Sumatran orangutan)).